We begin with the raw amino-acid sequence, 644 residues long: Exoribonuclease 2 (644 aa).

In terms of domain architecture, RNB spans 189–516 (REDLTALDFV…NHRLLKAVIK (328 aa)). Residues 561–643 (DTRFAAEIVD…ETRSIIARPV (83 aa)) form the S1 motif domain.

The protein belongs to the RNR ribonuclease family. RNase II subfamily.

It is found in the cytoplasm. It carries out the reaction Exonucleolytic cleavage in the 3'- to 5'-direction to yield nucleoside 5'-phosphates.. Involved in mRNA degradation. Hydrolyzes single-stranded polyribonucleotides processively in the 3' to 5' direction. This Escherichia coli O8 (strain IAI1) protein is Exoribonuclease 2.